The sequence spans 109 residues: Putative ankyrin repeat protein L482 (109 aa).

ANK repeat units lie at residues 1–26 (YLTEISGKGHIEIVKCLVNLGANITT), 27–56 (NNNYAIIQASEKGHLEVVKYLVGQNANIRS), 57–86 (ENNLAVRLASGNGHLEVVEYLVNLGADIRS), and 88–109 (NNYAIQSASQNGHLEVIEYLVA).

The polypeptide is Putative ankyrin repeat protein L482 (Acanthamoeba polyphaga (Amoeba)).